The chain runs to 353 residues: Uroporphyrinogen decarboxylase (353 aa).

Substrate is bound by residues 27–31 (RQAGR), Phe-46, Asp-76, Tyr-152, Ser-207, and His-321.

The protein belongs to the uroporphyrinogen decarboxylase family. As to quaternary structure, homodimer.

The protein localises to the cytoplasm. The catalysed reaction is uroporphyrinogen III + 4 H(+) = coproporphyrinogen III + 4 CO2. It functions in the pathway porphyrin-containing compound metabolism; protoporphyrin-IX biosynthesis; coproporphyrinogen-III from 5-aminolevulinate: step 4/4. Functionally, catalyzes the decarboxylation of four acetate groups of uroporphyrinogen-III to yield coproporphyrinogen-III. The protein is Uroporphyrinogen decarboxylase of Listeria monocytogenes serotype 4b (strain CLIP80459).